Reading from the N-terminus, the 195-residue chain is Molybdenum cofactor guanylyltransferase (195 aa).

Residues leucine 10 to glycine 12, lysine 23, asparagine 51, aspartate 69, and aspartate 99 contribute to the GTP site. Aspartate 99 lines the Mg(2+) pocket.

This sequence belongs to the MobA family. In terms of assembly, monomer. Mg(2+) is required as a cofactor.

The protein localises to the cytoplasm. The enzyme catalyses Mo-molybdopterin + GTP + H(+) = Mo-molybdopterin guanine dinucleotide + diphosphate. In terms of biological role, transfers a GMP moiety from GTP to Mo-molybdopterin (Mo-MPT) cofactor (Moco or molybdenum cofactor) to form Mo-molybdopterin guanine dinucleotide (Mo-MGD) cofactor. This is Molybdenum cofactor guanylyltransferase from Yersinia pestis bv. Antiqua (strain Antiqua).